A 701-amino-acid chain; its full sequence is Polyribonucleotide nucleotidyltransferase (701 aa).

D487 and D493 together coordinate Mg(2+). The KH domain maps to 554 to 613; the sequence is PTMIAMKIDTDKIRDVIGKGGATIRAICEETKASIDIEDDGSIKIFGETKEAAEAARQRV. Residues 623–691 form the S1 motif domain; it reads GKIYVGKVER…NRGRIKLSIK (69 aa).

Belongs to the polyribonucleotide nucleotidyltransferase family. As to quaternary structure, component of the RNA degradosome, which is a multiprotein complex involved in RNA processing and mRNA degradation. Mg(2+) serves as cofactor.

Its subcellular location is the cytoplasm. It catalyses the reaction RNA(n+1) + phosphate = RNA(n) + a ribonucleoside 5'-diphosphate. Its function is as follows. Involved in mRNA degradation. Catalyzes the phosphorolysis of single-stranded polyribonucleotides processively in the 3'- to 5'-direction. In Pseudomonas putida (strain W619), this protein is Polyribonucleotide nucleotidyltransferase.